The sequence spans 790 residues: MSNDSTEGTVGSCNATGLTDEKVKAYLSLHPQVLDEFVSESVSAETVEKWLKRKTNKAKDEPSPKEVSRYQDTNMQGVVYELNSYIEQRLDTGGDNHLLLYELSSIIRIATKADGFALYFLGECNNSLCVFIPPGMKEGQPRLIPAGPITQGTTISAYVAKSRKTLLVEDILGDERFPRGTGLESGTRIQSVLCLPIVTAIGDLIGILELYRHWGKEAFCLSHQEVATANLAWASVAIHQVQVCRGLAKQTELNDFLLDVSKTYFDNIVAIDSLLEHIMIYAKNLVNADRCALFQVDHKNKELYSDLFDIGEEKEGKPIFKKTKEIRFSIEKGIAGQVARTGEVLNIPDAYADPRFNREVDLYTGYTTRNILCMPIVSRGSVIGVVQMVNKISGSAFSKTDENNFKMFAVFCALALHCANMYHRIRHSECIYRVTMEKLSYHSICTSEEWQGLMRFNLPARICRDIELFHFDIGPFENMWPGIFVYMIHRSCGTSCFELEKLCRFIMSVKKNYRRVPYHNWKHAVTVAHCMYAILQNNNGLFTDLERKGLLIACLCHDLDHRGFSNSYLQKFDHPLAALYSTSTMEQHHFSQTVSILQLEGHNIFSTLSSSEYEQVLEIIRKAIIATDLALYFGNRKQLEEMYQTGSLNLHNQSHRDRVIGLMMTACDLCSVTKLWPVTKLTANDIYAEFWAEGDEMKKLGIQPIPMMDRDKRDEVPQGQLGFYNAVAIPCYTTLTQILPPTEPLLKACRDNLNQWEKVIRGEETAMWISGPGPAPSKSTPEKLNVKVED.

3',5'-cyclic AMP is bound by residues 290 to 291 (RC), 334 to 335 (IA), Thr368, Gln387, and His519. The 318-residue stretch at 446 to 763 (TSEEWQGLMR…NQWEKVIRGE (318 aa)) folds into the PDEase domain. Catalysis depends on His519, which acts as the Proton donor. His519 contacts 3',5'-cyclic GMP. A divalent metal cation is bound by residues His523, His557, Asp558, and Asp668. A 3',5'-cyclic AMP-binding site is contributed by Gln720. Gln720 provides a ligand contact to 3',5'-cyclic GMP. The segment at 768–790 (WISGPGPAPSKSTPEKLNVKVED) is disordered. The span at 780–790 (TPEKLNVKVED) shows a compositional bias: basic and acidic residues.

The protein belongs to the cyclic nucleotide phosphodiesterase family. Homodimer. The cofactor is a divalent metal cation. As to expression, detected in striatum (at protein level). Detected in testis and brain.

The protein localises to the cytoplasm. Its subcellular location is the cytosol. It catalyses the reaction a nucleoside 3',5'-cyclic phosphate + H2O = a nucleoside 5'-phosphate + H(+). The enzyme catalyses 3',5'-cyclic AMP + H2O = AMP + H(+). The catalysed reaction is 3',5'-cyclic GMP + H2O = GMP + H(+). It participates in purine metabolism; 3',5'-cyclic AMP degradation; AMP from 3',5'-cyclic AMP: step 1/1. It functions in the pathway purine metabolism; 3',5'-cyclic GMP degradation; GMP from 3',5'-cyclic GMP: step 1/1. Plays a role in signal transduction by regulating the intracellular concentration of cyclic nucleotides. Can hydrolyze both cAMP and cGMP, but has higher affinity for cAMP and is more efficient with cAMP as substrate. May play a critical role in regulating cAMP and cGMP levels in the striatum, a region of the brain that contributes to the control of movement and cognition. The protein is cAMP and cAMP-inhibited cGMP 3',5'-cyclic phosphodiesterase 10A (Pde10a) of Mus musculus (Mouse).